A 65-amino-acid chain; its full sequence is Beta-mammal toxin Tma1 (65 aa).

Residues 2–64 (KEGYLVGNDG…TWNSAKNRCG (63 aa)) enclose the LCN-type CS-alpha/beta domain. 4 cysteine pairs are disulfide-bonded: C12-C63, C16-C38, C24-C44, and C28-C46.

It belongs to the long (4 C-C) scorpion toxin superfamily. Sodium channel inhibitor family. Expressed by the venom gland.

It localises to the secreted. Its function is as follows. Beta toxins bind voltage-independently at site-4 of sodium channels (Nav) and shift the voltage of activation toward more negative potentials thereby affecting sodium channel activation and promoting spontaneous and repetitive firing. This toxin acts on human Nav1.4/SCN4A and Nav1.6/SCN8A voltage-gated sodium channels. The protein is Beta-mammal toxin Tma1 of Tityus macrochirus (Scorpion).